The sequence spans 408 residues: NADH-quinone oxidoreductase subunit H (408 aa).

9 consecutive transmembrane segments (helical) span residues 18–38, 84–104, 124–144, 165–185, 198–218, 261–281, 288–308, 321–341, and 353–373; these read LAKA…AILI, PIYL…FSVI, LPVA…GIVL, VVSY…YAGT, TWFV…MVGE, SALA…FNLI, WWPL…YFWL, MALG…VVAI, and WAAW…WGLA. A disordered region spans residues 381–408; sequence VQPPPPQSTGAYPVPPLPSVGTKETADA. Residues 382-398 show a composition bias toward pro residues; that stretch reads QPPPPQSTGAYPVPPLP.

It belongs to the complex I subunit 1 family. In terms of assembly, NDH-1 is composed of 14 different subunits. Subunits NuoA, H, J, K, L, M, N constitute the membrane sector of the complex.

The protein resides in the cell membrane. The catalysed reaction is a quinone + NADH + 5 H(+)(in) = a quinol + NAD(+) + 4 H(+)(out). In terms of biological role, NDH-1 shuttles electrons from NADH, via FMN and iron-sulfur (Fe-S) centers, to quinones in the respiratory chain. The immediate electron acceptor for the enzyme in this species is believed to be menaquinone. Couples the redox reaction to proton translocation (for every two electrons transferred, four hydrogen ions are translocated across the cytoplasmic membrane), and thus conserves the redox energy in a proton gradient. This subunit may bind ubiquinone. This chain is NADH-quinone oxidoreductase subunit H, found in Mycolicibacterium smegmatis (strain ATCC 700084 / mc(2)155) (Mycobacterium smegmatis).